Consider the following 102-residue polypeptide: Trans-acting regulatory protein HvrA (102 aa).

A DNA-binding region spans residues 80 to 85 (RGRKPK).

This sequence belongs to the histone-like protein H-NS family. As to quaternary structure, homodimer that oligomerizes on DNA into higher-order complexes that form bridges between disparate regions of DNA compacting it.

Its subcellular location is the cytoplasm. It localises to the nucleoid. Its function is as follows. A dim-light trans-acting activator of Puf and Puh expression, that has no effect on the expression of the Puc operon. Responsible for regulating light-harvesting-I and reaction center structural gene expression differentially from that of light-harvesting-II expression in response to alterations in light. Proper light regulation of light-harvesting and reaction center polypeptide synthesis is an important physiological trait that enables cells to adapt to ever-changing environmental conditions of light intensity. The protein is Trans-acting regulatory protein HvrA (hvrA) of Rhodobacter capsulatus (Rhodopseudomonas capsulata).